The sequence spans 437 residues: uncharacterized protein (437 aa).

Phosphoserine occurs at positions 290 and 293. A Phosphothreonine modification is found at threonine 296. Phosphoserine occurs at positions 418 and 428.

This is an uncharacterized protein from Schizosaccharomyces pombe (strain 972 / ATCC 24843) (Fission yeast).